The following is a 197-amino-acid chain: Protein Hikeshi (197 aa).

The required for F-X-F-G repeats-nucleoporins recognition and nuclear import stretch occupies residues V18–Y55. Residues Q124–S134 are flexible linker region involved in nuclear import of HSP70 proteins.

This sequence belongs to the OPI10 family. As to quaternary structure, forms an asymmetric homodimer; required for binding and nuclear import of HSP70 proteins. Interacts with ATP-bound HSP70 proteins. Interacts with NUP62 and NUP153 (via F-X-F-G repeats). Interacts with HSPA8.

It localises to the cytoplasm. It is found in the cytosol. The protein localises to the nucleus. Functionally, acts as a specific nuclear import carrier for HSP70 proteins following heat-shock stress: acts by mediating the nucleoporin-dependent translocation of ATP-bound HSP70 proteins into the nucleus. HSP70 proteins import is required to protect cells from heat shock damages. Does not translocate ADP-bound HSP70 proteins into the nucleus. The sequence is that of Protein Hikeshi from Homo sapiens (Human).